A 214-amino-acid chain; its full sequence is Large ribosomal subunit protein bL25 (214 aa).

Residues 178–214 form a disordered region; it reads VEPEEEELPETDEEGEGAEGEAAEAAEGESAEGESEE. Residues 179 to 214 show a composition bias toward acidic residues; sequence EPEEEELPETDEEGEGAEGEAAEAAEGESAEGESEE.

Belongs to the bacterial ribosomal protein bL25 family. CTC subfamily. Part of the 50S ribosomal subunit; part of the 5S rRNA/L5/L18/L25 subcomplex. Contacts the 5S rRNA. Binds to the 5S rRNA independently of L5 and L18.

This is one of the proteins that binds to the 5S RNA in the ribosome where it forms part of the central protuberance. The sequence is that of Large ribosomal subunit protein bL25 from Corynebacterium jeikeium (strain K411).